We begin with the raw amino-acid sequence, 401 residues long: Enoyl-[acyl-carrier-protein] reductase [NADH] (401 aa).

NAD(+)-binding positions include 48–53 (GASSGY), 74–75 (FE), 111–112 (DA), and 140–141 (LA). Tyr226 lines the substrate pocket. Tyr236 acts as the Proton donor in catalysis. Residues Lys245 and 274 to 276 (VVT) contribute to the NAD(+) site.

It belongs to the TER reductase family. As to quaternary structure, monomer.

It carries out the reaction a 2,3-saturated acyl-[ACP] + NAD(+) = a (2E)-enoyl-[ACP] + NADH + H(+). The protein operates within lipid metabolism; fatty acid biosynthesis. In terms of biological role, involved in the final reduction of the elongation cycle of fatty acid synthesis (FAS II). Catalyzes the reduction of a carbon-carbon double bond in an enoyl moiety that is covalently linked to an acyl carrier protein (ACP). This Xylella fastidiosa (strain Temecula1 / ATCC 700964) protein is Enoyl-[acyl-carrier-protein] reductase [NADH].